We begin with the raw amino-acid sequence, 300 residues long: NAD kinase (300 aa).

Catalysis depends on aspartate 75, which acts as the Proton acceptor. Residues 75-76 (DG), 149-150 (ND), arginine 177, aspartate 179, 190-195 (TAYALS), alanine 214, and glutamine 248 contribute to the NAD(+) site.

It belongs to the NAD kinase family. A divalent metal cation is required as a cofactor.

It localises to the cytoplasm. It carries out the reaction NAD(+) + ATP = ADP + NADP(+) + H(+). Involved in the regulation of the intracellular balance of NAD and NADP, and is a key enzyme in the biosynthesis of NADP. Catalyzes specifically the phosphorylation on 2'-hydroxyl of the adenosine moiety of NAD to yield NADP. The protein is NAD kinase of Burkholderia vietnamiensis (strain G4 / LMG 22486) (Burkholderia cepacia (strain R1808)).